The following is an 88-amino-acid chain: Small ribosomal subunit protein uS15 (88 aa).

The protein belongs to the universal ribosomal protein uS15 family. In terms of assembly, part of the 30S ribosomal subunit. Forms a bridge to the 50S subunit in the 70S ribosome, contacting the 23S rRNA.

Functionally, one of the primary rRNA binding proteins, it binds directly to 16S rRNA where it helps nucleate assembly of the platform of the 30S subunit by binding and bridging several RNA helices of the 16S rRNA. Its function is as follows. Forms an intersubunit bridge (bridge B4) with the 23S rRNA of the 50S subunit in the ribosome. This is Small ribosomal subunit protein uS15 from Leptospira interrogans serogroup Icterohaemorrhagiae serovar copenhageni (strain Fiocruz L1-130).